Consider the following 100-residue polypeptide: Putative membrane protein insertion efficiency factor (100 aa).

This sequence belongs to the UPF0161 family.

The protein localises to the cell membrane. In terms of biological role, could be involved in insertion of integral membrane proteins into the membrane. The polypeptide is Putative membrane protein insertion efficiency factor (Enterococcus faecalis (strain ATCC 700802 / V583)).